The following is a 202-amino-acid chain: Transmembrane protein 223 (202 aa).

Residues 1 to 43 lie on the Mitochondrial matrix side of the membrane; that stretch reads MAAPWRRWPTGLLAVLRPLLTCRPLQGTTLQRDVLLFEHDRGR. Residues 44-64 form a helical membrane-spanning segment; it reads FFTILGLFCAGQGVFWASMAV. Residues 65-97 are Mitochondrial intermembrane-facing; it reads AAVSRPPVPVQPLDAEVPNRGPFDLRSALWRYG. A helical membrane pass occupies residues 98-118; it reads LAVGCGAIGALVLGAGLLFSL. Residues 119–202 lie on the Mitochondrial matrix side of the membrane; that stretch reads RSVRSVVLRA…DNTVGAYRSL (84 aa).

The protein belongs to the TMEM223 family. In terms of assembly, associates with the mitochondrial ribosome.

Its subcellular location is the mitochondrion inner membrane. In terms of biological role, mitochondrial ribosome-associated protein involved in the first steps of cytochrome c oxidase complex (complex IV) biogenesis. Stimulates the translation of MT-CO1 mRNA and is a constituent of early MT-CO1 assembly intermediates. The sequence is that of Transmembrane protein 223 from Homo sapiens (Human).